A 325-amino-acid chain; its full sequence is Gamma-hemolysin component B (325 aa).

The first 26 residues, 1 to 26 (MKMNKLVKSSVATSMALLLLSGTANA), serve as a signal peptide directing secretion.

It belongs to the aerolysin family. Toxicity requires sequential binding and synergistic association of a class S and a class F component which form heterooligomeric complexes. HlgB (class F) associates with either hlgA thus forming an AB toxin or with hlgC thus forming a CB toxin. Interacts with host AMFR.

It localises to the secreted. Toxin that seems to act by forming pores in the membrane of the cell. Has a hemolytic and a leucotoxic activity. Promotes host AMFR-mediated inflammation by mediating 'Lys-27'-linked ubiquitination of TAB3, TAK1-TAB3 complex formation and phosphorylation of TAK1/MAP3K7. In turn, activates host NF-kappa-B signaling pathway. The polypeptide is Gamma-hemolysin component B (hlgB) (Staphylococcus aureus (strain NCTC 8325 / PS 47)).